Reading from the N-terminus, the 543-residue chain is Light-independent protochlorophyllide reductase subunit B (543 aa).

A [4Fe-4S] cluster-binding site is contributed by D36. Catalysis depends on D287, which acts as the Proton donor. A substrate-binding site is contributed by 422-423 (GL).

The protein belongs to the ChlB/BchB/BchZ family. As to quaternary structure, protochlorophyllide reductase is composed of three subunits; BchL, BchN and BchB. Forms a heterotetramer of two BchB and two BchN subunits. [4Fe-4S] cluster is required as a cofactor.

The enzyme catalyses chlorophyllide a + oxidized 2[4Fe-4S]-[ferredoxin] + 2 ADP + 2 phosphate = protochlorophyllide a + reduced 2[4Fe-4S]-[ferredoxin] + 2 ATP + 2 H2O. Its pathway is porphyrin-containing compound metabolism; bacteriochlorophyll biosynthesis (light-independent). Functionally, component of the dark-operative protochlorophyllide reductase (DPOR) that uses Mg-ATP and reduced ferredoxin to reduce ring D of protochlorophyllide (Pchlide) to form chlorophyllide a (Chlide). This reaction is light-independent. The NB-protein (BchN-BchB) is the catalytic component of the complex. The polypeptide is Light-independent protochlorophyllide reductase subunit B (Rubrivivax gelatinosus (strain NBRC 100245 / IL144)).